Consider the following 317-residue polypeptide: Pantothenate kinase (317 aa).

Residue 99–106 (GSVSVGKS) coordinates ATP.

This sequence belongs to the prokaryotic pantothenate kinase family.

It is found in the cytoplasm. It carries out the reaction (R)-pantothenate + ATP = (R)-4'-phosphopantothenate + ADP + H(+). Its pathway is cofactor biosynthesis; coenzyme A biosynthesis; CoA from (R)-pantothenate: step 1/5. The sequence is that of Pantothenate kinase from Mannheimia succiniciproducens (strain KCTC 0769BP / MBEL55E).